Here is a 185-residue protein sequence, read N- to C-terminus: Large ribosomal subunit protein uL13 (185 aa).

Belongs to the universal ribosomal protein uL13 family. Part of the 50S ribosomal subunit.

Functionally, this protein is one of the early assembly proteins of the 50S ribosomal subunit, although it is not seen to bind rRNA by itself. It is important during the early stages of 50S assembly. This is Large ribosomal subunit protein uL13 from Pyrobaculum islandicum (strain DSM 4184 / JCM 9189 / GEO3).